The primary structure comprises 219 residues: Ribose-5-phosphate isomerase A (219 aa).

Substrate is bound by residues 28–31 (TGST), 81–84 (DGAD), and 94–97 (KGGG). The active-site Proton acceptor is E103. K121 contributes to the substrate binding site.

It belongs to the ribose 5-phosphate isomerase family. Homodimer.

The catalysed reaction is aldehydo-D-ribose 5-phosphate = D-ribulose 5-phosphate. Its pathway is carbohydrate degradation; pentose phosphate pathway; D-ribose 5-phosphate from D-ribulose 5-phosphate (non-oxidative stage): step 1/1. Functionally, catalyzes the reversible conversion of ribose-5-phosphate to ribulose 5-phosphate. The sequence is that of Ribose-5-phosphate isomerase A from Photobacterium profundum (strain SS9).